Consider the following 904-residue polypeptide: Protein translocase subunit SecA (904 aa).

Residues glutamine 87, 105–109 (GEGKT), and aspartate 507 each bind ATP. Positions 865-887 (GEGAEAAGQQPADAGPKIGRNDP) are disordered. The segment covering 868–880 (AEAAGQQPADAGP) has biased composition (low complexity). Cysteine 888, cysteine 890, cysteine 899, and histidine 900 together coordinate Zn(2+).

This sequence belongs to the SecA family. As to quaternary structure, monomer and homodimer. Part of the essential Sec protein translocation apparatus which comprises SecA, SecYEG and auxiliary proteins SecDF-YajC and YidC. Requires Zn(2+) as cofactor.

It is found in the cell inner membrane. The protein localises to the cytoplasm. The catalysed reaction is ATP + H2O + cellular proteinSide 1 = ADP + phosphate + cellular proteinSide 2.. Its function is as follows. Part of the Sec protein translocase complex. Interacts with the SecYEG preprotein conducting channel. Has a central role in coupling the hydrolysis of ATP to the transfer of proteins into and across the cell membrane, serving both as a receptor for the preprotein-SecB complex and as an ATP-driven molecular motor driving the stepwise translocation of polypeptide chains across the membrane. The protein is Protein translocase subunit SecA of Dechloromonas aromatica (strain RCB).